Here is a 736-residue protein sequence, read N- to C-terminus: Copper-exporting P-type ATPase (736 aa).

Basic residues predominate over residues 1 to 17 (MKHDHHQGHTHSGKGHA). The disordered stretch occupies residues 1-32 (MKHDHHQGHTHSGKGHACHHEHNSPKTQQASS). A run of 6 helical transmembrane segments spans residues 85–105 (FWIALMLTIPVVILEMGGHGL), 114–134 (SSWIQLLLATPVVLWGGWPFF), 149–169 (FTLIAMGIGVAWIYSMVAVLW), 183–203 (VVAVYFEAAAVITTLVLLGQV), 341–361 (GWFVPAVILVAVLSFIVWALL), and 369–389 (YGLIAAVSVLIIACPCALGLA). D426 acts as the 4-aspartylphosphate intermediate in catalysis. D426, T428, and D624 together coordinate Mg(2+). A run of 2 helical transmembrane segments spans residues 682-702 (LFFAFIYNVLGVPLAAGVLYP) and 706-726 (LLLSPMIAAAAMALSSVSVII).

Belongs to the cation transport ATPase (P-type) (TC 3.A.3) family. Type IB subfamily. Mg(2+) is required as a cofactor.

The protein localises to the cell inner membrane. It carries out the reaction Cu(+)(in) + ATP + H2O = Cu(+)(out) + ADP + phosphate + H(+). Its activity is regulated as follows. Activated by phospholipids, Mg(2+) and Cu(+). Its function is as follows. Couples the hydrolysis of ATP with the export of copper. The chain is Copper-exporting P-type ATPase from Legionella pneumophila subsp. pneumophila (strain Philadelphia 1 / ATCC 33152 / DSM 7513).